The following is a 685-amino-acid chain: Mesothelin-like protein (685 aa).

The signal sequence occupies residues 1–32 (MSRTLRPSAMGSRVGALASPGLALLLSLTAHC). Residues 33–627 (SGPQAKGLPK…GVSHTSGSPP (595 aa)) lie on the Extracellular side of the membrane. Asn315 and Asn400 each carry an N-linked (GlcNAc...) asparagine glycan. The interval 603–624 (PPSSLIHSLDPPGNDGVSHTSG) is disordered. The helical transmembrane segment at 628–648 (VHLGYLSLAVALPSSLLWLLL) threads the bilayer. Topologically, residues 649–685 (CQLPSGQMATAHRTLGPMALAQGSWTPEHQIPEKRSC) are cytoplasmic.

This sequence belongs to the mesothelin family.

The protein localises to the membrane. May play a role in cellular adhesion. This is Mesothelin-like protein (Mslnl) from Mus musculus (Mouse).